The following is a 113-amino-acid chain: Putative pterin-4-alpha-carbinolamine dehydratase (113 aa).

It belongs to the pterin-4-alpha-carbinolamine dehydratase family.

It carries out the reaction (4aS,6R)-4a-hydroxy-L-erythro-5,6,7,8-tetrahydrobiopterin = (6R)-L-erythro-6,7-dihydrobiopterin + H2O. The sequence is that of Putative pterin-4-alpha-carbinolamine dehydratase from Idiomarina loihiensis (strain ATCC BAA-735 / DSM 15497 / L2-TR).